The chain runs to 474 residues: tRNA-2-methylthio-N(6)-dimethylallyladenosine synthase (474 aa).

In terms of domain architecture, MTTase N-terminal spans 3–120; sequence KKLLIKTWGC…LPEMIKQSQS (118 aa). Positions 12, 49, 83, 157, 161, and 164 each coordinate [4Fe-4S] cluster. A Radical SAM core domain is found at 143 to 375; the sequence is RAEGATAFVS…QQTVNTQAMR (233 aa). Residues 378-441 form the TRAM domain; sequence RQMLDTEQRV…ANSLRGELVR (64 aa).

The protein belongs to the methylthiotransferase family. MiaB subfamily. Monomer. [4Fe-4S] cluster serves as cofactor.

It localises to the cytoplasm. The catalysed reaction is N(6)-dimethylallyladenosine(37) in tRNA + (sulfur carrier)-SH + AH2 + 2 S-adenosyl-L-methionine = 2-methylsulfanyl-N(6)-dimethylallyladenosine(37) in tRNA + (sulfur carrier)-H + 5'-deoxyadenosine + L-methionine + A + S-adenosyl-L-homocysteine + 2 H(+). Catalyzes the methylthiolation of N6-(dimethylallyl)adenosine (i(6)A), leading to the formation of 2-methylthio-N6-(dimethylallyl)adenosine (ms(2)i(6)A) at position 37 in tRNAs that read codons beginning with uridine. The chain is tRNA-2-methylthio-N(6)-dimethylallyladenosine synthase from Vibrio campbellii (strain ATCC BAA-1116).